A 333-amino-acid chain; its full sequence is Viral cathepsin (333 aa).

An N-terminal signal peptide occupies residues 1-20 (MTKLLNFVILASVLTVTAHA). Residues 21-124 (LTYDLNNSDE…VIKDEPQALL (104 aa)) constitute a propeptide, activation peptide. Intrachain disulfides connect cysteine 145-cysteine 186, cysteine 179-cysteine 219, and cysteine 272-cysteine 321. Cysteine 148 is an active-site residue. A glycan (N-linked (GlcNAc...) asparagine; by host) is linked at asparagine 170. Residues histidine 280 and asparagine 300 contribute to the active site.

It belongs to the peptidase C1 family. Post-translationally, synthesized as an inactive proenzyme and activated by proteolytic removal of the inhibitory propeptide.

The enzyme catalyses Endopeptidase of broad specificity, hydrolyzing substrates of both cathepsin L and cathepsin B.. Functionally, cysteine protease that plays an essential role in host liquefaction to facilitate horizontal transmission of the virus. May participate in the degradation of foreign protein expressed by the baculovirus system. This Cydia pomonella granulosis virus (isolate Mexico/1963) (CpGV) protein is Viral cathepsin (VCATH).